The chain runs to 66 residues: Large ribosomal subunit protein bL33c (66 aa).

The protein belongs to the bacterial ribosomal protein bL33 family.

It is found in the plastid. Its subcellular location is the chloroplast. This chain is Large ribosomal subunit protein bL33c, found in Eucalyptus globulus subsp. globulus (Tasmanian blue gum).